Consider the following 341-residue polypeptide: Heat-inducible transcription repressor HrcA (341 aa).

Belongs to the HrcA family.

Its function is as follows. Negative regulator of class I heat shock genes (grpE-dnaK-dnaJ and groELS operons). Prevents heat-shock induction of these operons. In Corynebacterium glutamicum (strain ATCC 13032 / DSM 20300 / JCM 1318 / BCRC 11384 / CCUG 27702 / LMG 3730 / NBRC 12168 / NCIMB 10025 / NRRL B-2784 / 534), this protein is Heat-inducible transcription repressor HrcA.